Consider the following 283-residue polypeptide: Thymidylate synthase (283 aa).

Arginine 22 is a dUMP binding site. The active-site Nucleophile is cysteine 160. Residues 180–183 (RSCD), asparagine 191, and 221–223 (HIY) each bind dUMP. Aspartate 183 is a (6R)-5,10-methylene-5,6,7,8-tetrahydrofolate binding site. Serine 282 is a (6R)-5,10-methylene-5,6,7,8-tetrahydrofolate binding site.

Belongs to the thymidylate synthase family. Bacterial-type ThyA subfamily. As to quaternary structure, homodimer.

The protein resides in the cytoplasm. The enzyme catalyses dUMP + (6R)-5,10-methylene-5,6,7,8-tetrahydrofolate = 7,8-dihydrofolate + dTMP. The protein operates within pyrimidine metabolism; dTTP biosynthesis. Catalyzes the reductive methylation of 2'-deoxyuridine-5'-monophosphate (dUMP) to 2'-deoxythymidine-5'-monophosphate (dTMP) while utilizing 5,10-methylenetetrahydrofolate (mTHF) as the methyl donor and reductant in the reaction, yielding dihydrofolate (DHF) as a by-product. This enzymatic reaction provides an intracellular de novo source of dTMP, an essential precursor for DNA biosynthesis. The protein is Thymidylate synthase of Haemophilus influenzae (strain 86-028NP).